A 586-amino-acid polypeptide reads, in one-letter code: Mitochondrial tRNA methylthiotransferase CDK5RAP1 (586 aa).

The N-terminal 30 residues, 1 to 30 (MHPLQRVFRAQRLSAPLTSMCWVLLRTFRA), are a transit peptide targeting the mitochondrion. The interval 68–90 (ASVPQEKPSSPEVEDPPPYLSGD) is disordered. The region spanning 97–217 (RKVYLETYGC…LPRLLAVVES (121 aa)) is the MTTase N-terminal domain. 6 residues coordinate [4Fe-4S] cluster: Cys106, Cys142, Cys180, Cys255, Cys259, and Cys262. A Radical SAM core domain is found at 241–495 (SPSATSAFVS…ITVFREEASK (255 aa)). The region spanning 498 to 573 (ATSVGCTQLV…SQTLKGHILC (76 aa)) is the TRAM domain.

The protein belongs to the methylthiotransferase family. MiaB subfamily. As to quaternary structure, interacts with CDK5R1 (p35 form). CDK5RAP1, CDK5RAP2 and CDK5RAP3 show competitive binding to CDK5R1. Forms a complex with CDK5R1 and CDK5. The cofactor is [4Fe-4S] cluster. Expressed in brain.

Its subcellular location is the mitochondrion inner membrane. The catalysed reaction is N(6)-dimethylallyladenosine(37) in tRNA + (sulfur carrier)-SH + AH2 + 2 S-adenosyl-L-methionine = 2-methylsulfanyl-N(6)-dimethylallyladenosine(37) in tRNA + (sulfur carrier)-H + 5'-deoxyadenosine + L-methionine + A + S-adenosyl-L-homocysteine + 2 H(+). In terms of biological role, methylthiotransferase that catalyzes the conversion of N6-(dimethylallyl)adenosine (i(6)A) to 2-methylthio-N6-(dimethylallyl)adenosine (ms(2)i(6)A) at position 37 (adjacent to the 3'-end of the anticodon) of four mitochondrial DNA-encoded tRNAs (Ser(UCN), Phe, Tyr and Trp). Essential for efficient and highly accurate protein translation by the ribosome. Specifically inhibits CDK5 activation by CDK5R1. Essential for efficient mitochondrial protein synthesis and respiratory chain. The sequence is that of Mitochondrial tRNA methylthiotransferase CDK5RAP1 (Cdk5rap1) from Rattus norvegicus (Rat).